Here is a 476-residue protein sequence, read N- to C-terminus: Serine/threonine-protein kinase PBL36 (476 aa).

Residues phenylalanine 126–leucine 412 enclose the Protein kinase domain. Residues leucine 132–valine 140 and lysine 164 each bind ATP. A Phosphotyrosine modification is found at tyrosine 209. Residue aspartate 259 is the Proton acceptor of the active site. A phosphoserine mark is found at serine 263 and serine 293. Threonine 294 and threonine 299 each carry phosphothreonine. Tyrosine 307 carries the phosphotyrosine modification. Residues asparagine 431 to proline 476 are disordered.

This sequence belongs to the protein kinase superfamily. Ser/Thr protein kinase family. Interacts with SD129. In terms of processing, phosphorylated by SD129 in response to the pathogen-associated molecular pattern (PAMP) 3-OH-C10:0, a medium-chain 3-hydroxy fatty acid.

The protein resides in the cell membrane. The enzyme catalyses L-seryl-[protein] + ATP = O-phospho-L-seryl-[protein] + ADP + H(+). It catalyses the reaction L-threonyl-[protein] + ATP = O-phospho-L-threonyl-[protein] + ADP + H(+). Involved in chitin-triggered immune signaling and is required for reactive oxygen species (ROS) production. Acts downstream of SD129 in defense signaling triggered by the pathogen-associated molecular pattern (PAMP) 3-OH-C10:0, a medium-chain 3-hydroxy fatty acid. The polypeptide is Serine/threonine-protein kinase PBL36 (Arabidopsis thaliana (Mouse-ear cress)).